Here is a 1240-residue protein sequence, read N- to C-terminus: ABC transporter B family member 15 (1240 aa).

A run of 6 helical transmembrane segments spans residues 35-55 (MGLG…VLLI), 82-102 (VALL…GYCW), 158-180 (LPNF…ILLW), 184-206 (IVGL…ALIS), 264-284 (GITI…SWYG), and 296-316 (GTVF…GGGL). The ABC transmembrane type-1 1 domain occupies 35 to 324 (MGLGLIGAVG…GLSNLKYFFE (290 aa)). The ABC transporter 1 domain occupies 359-595 (VEFKNVKFVY…IDGQYSTLVH (237 aa)). ATP is bound at residue 394 to 401 (GGSGSGKS). Residues N542, N605, and N622 are each glycosylated (N-linked (GlcNAc...) asparagine). The segment at 617–646 (SKDIRNSSRVSTLSRSSSANSVTGPSTIKN) is disordered. Residues 623 to 639 (SSRVSTLSRSSSANSVT) show a composition bias toward low complexity. N-linked (GlcNAc...) asparagine glycosylation occurs at N646. An ABC transmembrane type-1 2 domain is found at 672-960 (ALYGCISATL…AGSMTTDLAK (289 aa)). The next 2 helical transmembrane spans lie at 681-701 (LFGA…SVYF) and 714-734 (IYAL…ISQH). N769 carries an N-linked (GlcNAc...) asparagine glycan. Helical transmembrane passes span 794-813 (ALVV…GLVI), 817-839 (LALV…RVLL), 895-915 (SWFA…TWAL), and 923-943 (LIQD…ILVS). An ABC transporter 2 domain is found at 995-1233 (VEFLDVDFSY…GPTGIYFSLV (239 aa)). N-linked (GlcNAc...) asparagine glycosylation is present at N1015. Residue 1030–1037 (GPSGSGKS) participates in ATP binding.

The protein belongs to the ABC transporter superfamily. ABCB family. Multidrug resistance exporter (TC 3.A.1.201) subfamily.

It localises to the membrane. The polypeptide is ABC transporter B family member 15 (ABCB15) (Arabidopsis thaliana (Mouse-ear cress)).